The chain runs to 489 residues: Aspartate/glutamate permease AcaP (489 aa).

12 helical membrane passes run 6–26, 36–56, 91–111, 122–142, 152–172, 195–215, 238–258, 290–310, 342–362, 373–393, 413–433, and 449–469; these read IRWF…GNVV, VVTS…LIVG, VVHI…FGWV, MSMT…LWLS, IGGL…VMAI, IPKF…AVGG, FLLA…MGMI, LMIV…AFSI, GYTL…LGIG, NLNS…FIML, AMIA…LGMV, and LASN…LPFI.

It belongs to the amino acid-polyamine-organocation (APC) superfamily. Glutamate:GABA antiporter (GGA) (TC 2.A.3.7) family.

Its subcellular location is the cell membrane. Its function is as follows. Involved in aspartate and glutamate uptake. Plays no significant role in the excretion of accumulated glutamate. The chain is Aspartate/glutamate permease AcaP from Lactococcus lactis subsp. cremoris (strain MG1363).